Reading from the N-terminus, the 541-residue chain is Ascorbate transporter, chloroplastic (541 aa).

The transit peptide at 1–28 (MALGGLISNRNFGSFIGSGNGCQRLGKS) directs the protein to the chloroplast. Helical transmembrane passes span 133 to 155 (VIVL…MSIA), 170 to 190 (VGLI…LGGI), 199 to 219 (VVLG…PIAA), 221 to 241 (LGLP…GVAM), 263 to 283 (LVYS…PMLI), 286 to 306 (FGWP…FLLW), 352 to 372 (VWAL…LLTW), 390 to 410 (LLCV…GWIA), 430 to 450 (IGFL…TPAM), 481 to 501 (AGVL…FGTA), and 515 to 535 (VFKV…LFAT).

It belongs to the major facilitator superfamily. Sodium/anion cotransporter (TC 2.A.1.14) family. In terms of tissue distribution, expressed in stems, developing siliques, leaf mesophyll cells and sepals of mature flowers. Not detected in roots. Detected in palisade tissue rather than spongy tissue from the leaves.

Its subcellular location is the plastid. The protein resides in the chloroplast inner membrane. Insensitive to dehydroascorbate, p-isoascorbate, inorganic phosphate, glutamate, ATP, p-aminohippuric acid or tetraethylammonium. In terms of biological role, inorganic phosphate and probable anion transporter. Ascorbate transporter bridging the chloroplast envelope. Transports ascorbate from the cytosol into the chloroplast. Requires chloride ions and the presence of an electrochemical potential across the membrane for activity. This chain is Ascorbate transporter, chloroplastic (PHT4;4), found in Arabidopsis thaliana (Mouse-ear cress).